Reading from the N-terminus, the 115-residue chain is Large ribosomal subunit protein uL18 (115 aa).

The disordered stretch occupies residues Met-1 to Val-20. A compositionally biased stretch (basic residues) spans Ala-8–Ser-18.

The protein belongs to the universal ribosomal protein uL18 family. As to quaternary structure, part of the 50S ribosomal subunit; part of the 5S rRNA/L5/L18/L25 subcomplex. Contacts the 5S and 23S rRNAs.

Its function is as follows. This is one of the proteins that bind and probably mediate the attachment of the 5S RNA into the large ribosomal subunit, where it forms part of the central protuberance. The chain is Large ribosomal subunit protein uL18 from Mesoplasma florum (strain ATCC 33453 / NBRC 100688 / NCTC 11704 / L1) (Acholeplasma florum).